Consider the following 241-residue polypeptide: 1-(5-phosphoribosyl)-5-[(5-phosphoribosylamino)methylideneamino] imidazole-4-carboxamide isomerase (241 aa).

Catalysis depends on Asp8, which acts as the Proton acceptor. The active-site Proton donor is Asp130.

Belongs to the HisA/HisF family.

The protein localises to the cytoplasm. The catalysed reaction is 1-(5-phospho-beta-D-ribosyl)-5-[(5-phospho-beta-D-ribosylamino)methylideneamino]imidazole-4-carboxamide = 5-[(5-phospho-1-deoxy-D-ribulos-1-ylimino)methylamino]-1-(5-phospho-beta-D-ribosyl)imidazole-4-carboxamide. It participates in amino-acid biosynthesis; L-histidine biosynthesis; L-histidine from 5-phospho-alpha-D-ribose 1-diphosphate: step 4/9. The protein is 1-(5-phosphoribosyl)-5-[(5-phosphoribosylamino)methylideneamino] imidazole-4-carboxamide isomerase of Leptospira interrogans serogroup Icterohaemorrhagiae serovar copenhageni (strain Fiocruz L1-130).